A 234-amino-acid polypeptide reads, in one-letter code: Small ribosomal subunit protein eS4 (234 aa).

The 64-residue stretch at 39 to 102 folds into the S4 RNA-binding domain; that stretch reads MPLVVVLRDL…NANYRVVIGM (64 aa).

It belongs to the eukaryotic ribosomal protein eS4 family.

This is Small ribosomal subunit protein eS4 from Methanocella arvoryzae (strain DSM 22066 / NBRC 105507 / MRE50).